A 155-amino-acid polypeptide reads, in one-letter code: D-aminoacyl-tRNA deacylase (155 aa).

A Gly-cisPro motif, important for rejection of L-amino acids motif is present at residues 137 to 138; sequence GP.

It belongs to the DTD family. As to quaternary structure, homodimer.

The protein localises to the cytoplasm. The catalysed reaction is glycyl-tRNA(Ala) + H2O = tRNA(Ala) + glycine + H(+). The enzyme catalyses a D-aminoacyl-tRNA + H2O = a tRNA + a D-alpha-amino acid + H(+). Its function is as follows. An aminoacyl-tRNA editing enzyme that deacylates mischarged D-aminoacyl-tRNAs. Also deacylates mischarged glycyl-tRNA(Ala), protecting cells against glycine mischarging by AlaRS. Acts via tRNA-based rather than protein-based catalysis; rejects L-amino acids rather than detecting D-amino acids in the active site. By recycling D-aminoacyl-tRNA to D-amino acids and free tRNA molecules, this enzyme counteracts the toxicity associated with the formation of D-aminoacyl-tRNA entities in vivo and helps enforce protein L-homochirality. This Nitrosococcus oceani (strain ATCC 19707 / BCRC 17464 / JCM 30415 / NCIMB 11848 / C-107) protein is D-aminoacyl-tRNA deacylase.